A 228-amino-acid chain; its full sequence is UPF0758 protein MW1604 (228 aa).

Positions Lys102–Phe224 constitute an MPN domain. Positions 173, 175, and 186 each coordinate Zn(2+). Residues His173 to Asp186 carry the JAMM motif motif.

The protein belongs to the UPF0758 family.

This Staphylococcus aureus (strain MW2) protein is UPF0758 protein MW1604.